Here is a 377-residue protein sequence, read N- to C-terminus: Nitric oxide reductase FlRd-NAD(+) reductase (377 aa).

This sequence belongs to the FAD-dependent oxidoreductase family. The cofactor is FAD.

It is found in the cytoplasm. The enzyme catalyses 2 reduced [nitric oxide reductase rubredoxin domain] + NAD(+) + H(+) = 2 oxidized [nitric oxide reductase rubredoxin domain] + NADH. It participates in nitrogen metabolism; nitric oxide reduction. Functionally, one of at least two accessory proteins for anaerobic nitric oxide (NO) reductase. Reduces the rubredoxin moiety of NO reductase. The sequence is that of Nitric oxide reductase FlRd-NAD(+) reductase from Salmonella typhi.